Here is a 568-residue protein sequence, read N- to C-terminus: Mannitol 2-dehydrogenase (568 aa).

109–120 (IVHVGVGGFHRA) serves as a coordination point for NAD(+).

This sequence belongs to the mannitol dehydrogenase family. Monomer.

It carries out the reaction D-mannitol + NAD(+) = D-fructose + NADH + H(+). Functionally, catalyzes the NAD(H)-dependent interconversion of D-fructose and D-mannitol in the mannitol metabolic pathway. This Phaeosphaeria nodorum (strain SN15 / ATCC MYA-4574 / FGSC 10173) (Glume blotch fungus) protein is Mannitol 2-dehydrogenase.